The following is a 270-amino-acid chain: Hydroxyethylthiazole kinase (270 aa).

Methionine 47 is a substrate binding site. ATP contacts are provided by arginine 123 and threonine 169. Glycine 196 provides a ligand contact to substrate.

This sequence belongs to the Thz kinase family. The cofactor is Mg(2+).

The catalysed reaction is 5-(2-hydroxyethyl)-4-methylthiazole + ATP = 4-methyl-5-(2-phosphooxyethyl)-thiazole + ADP + H(+). It functions in the pathway cofactor biosynthesis; thiamine diphosphate biosynthesis; 4-methyl-5-(2-phosphoethyl)-thiazole from 5-(2-hydroxyethyl)-4-methylthiazole: step 1/1. Its function is as follows. Catalyzes the phosphorylation of the hydroxyl group of 4-methyl-5-beta-hydroxyethylthiazole (THZ). The polypeptide is Hydroxyethylthiazole kinase (Roseiflexus sp. (strain RS-1)).